A 153-amino-acid polypeptide reads, in one-letter code: D-aminoacyl-tRNA deacylase (153 aa).

The Gly-cisPro motif, important for rejection of L-amino acids signature appears at 137-138; it reads GP.

The protein belongs to the DTD family. In terms of assembly, homodimer.

It is found in the cytoplasm. It catalyses the reaction glycyl-tRNA(Ala) + H2O = tRNA(Ala) + glycine + H(+). The enzyme catalyses a D-aminoacyl-tRNA + H2O = a tRNA + a D-alpha-amino acid + H(+). Its function is as follows. An aminoacyl-tRNA editing enzyme that deacylates mischarged D-aminoacyl-tRNAs. Also deacylates mischarged glycyl-tRNA(Ala), protecting cells against glycine mischarging by AlaRS. Acts via tRNA-based rather than protein-based catalysis; rejects L-amino acids rather than detecting D-amino acids in the active site. By recycling D-aminoacyl-tRNA to D-amino acids and free tRNA molecules, this enzyme counteracts the toxicity associated with the formation of D-aminoacyl-tRNA entities in vivo and helps enforce protein L-homochirality. This chain is D-aminoacyl-tRNA deacylase, found in Dehalococcoides mccartyi (strain ATCC BAA-2266 / KCTC 15142 / 195) (Dehalococcoides ethenogenes (strain 195)).